Consider the following 402-residue polypeptide: Secondary metabolism regulator laeA (402 aa).

Residues Met-1–Asp-70 are disordered. Residues Ser-11 to Cys-21 show a composition bias toward acidic residues.

This sequence belongs to the methyltransferase superfamily. LaeA methyltransferase family.

Its subcellular location is the nucleus. It catalyses the reaction L-methionyl-[protein] + S-adenosyl-L-methionine = S-methyl-L-methionyl-[protein] + S-adenosyl-L-homocysteine. Functionally, methyltransferase that performs automethylation. No other methyl-accepting substrate has been identified yet. Acts as a global regulator for secondary metabolite gene expression. Negatively regulates the production of coprinoferrin, a structurally novel acylated tripeptide hydroxamate siderophore. The polypeptide is Secondary metabolism regulator laeA (Coprinopsis cinerea (strain Okayama-7 / 130 / ATCC MYA-4618 / FGSC 9003) (Inky cap fungus)).